The primary structure comprises 158 residues: Transcriptional repressor NrdR (158 aa).

Positions 1–22 (MRCPYCGSEDTQVKDSRPAEDN) are disordered. A zinc finger lies at 3-34 (CPYCGSEDTQVKDSRPAEDNTSIRRRRICPDC). The segment covering 11 to 22 (TQVKDSRPAEDN) has biased composition (basic and acidic residues). Positions 49–139 (LMVIKKTGRK…VYRDFSLAED (91 aa)) constitute an ATP-cone domain.

Belongs to the NrdR family. Zn(2+) serves as cofactor.

In terms of biological role, negatively regulates transcription of bacterial ribonucleotide reductase nrd genes and operons by binding to NrdR-boxes. This chain is Transcriptional repressor NrdR, found in Rhizobium etli (strain CIAT 652).